Reading from the N-terminus, the 247-residue chain is TM2 domain-containing protein 3 (247 aa).

The first 30 residues, 1 to 30 (MDLMMALKRVCRVLLFVTQMYVFSGRGSLS), serve as a signal peptide directing secretion. At 31–179 (FEYSQPVAQP…RTFPKMLYCN (149 aa)) the chain is on the extracellular side. N-linked (GlcNAc...) asparagine glycosylation is found at asparagine 87, asparagine 99, asparagine 139, asparagine 155, asparagine 169, and asparagine 179. A helical transmembrane segment spans residues 180–200 (WTGGYKWSTALALSITLGGFG). A TM2 domain is found at 183–231 (GYKWSTALALSITLGGFGADRFYLGQWREGLGKLFSFGGLGIWTLIDVF). Over 201–215 (ADRFYLGQWREGLGK) the chain is Cytoplasmic. The helical transmembrane segment at 216 to 236 (LFSFGGLGIWTLIDVFLISVG) threads the bilayer. The Extracellular segment spans residues 237 to 247 (YVGPADGSLYI).

This sequence belongs to the TM2 family.

It is found in the membrane. The protein is TM2 domain-containing protein 3 (tm2d3) of Xenopus laevis (African clawed frog).